Consider the following 261-residue polypeptide: Glutathione S-transferase theta-1 (261 aa).

The GST N-terminal domain maps to G2–D101. Glutathione contacts are provided by residues K72–V73 and E85–C86. Positions D107–L248 constitute a GST C-terminal domain.

This sequence belongs to the GST superfamily. Theta family. As to quaternary structure, homodimer.

The protein localises to the cytoplasm. The enzyme catalyses RX + glutathione = an S-substituted glutathione + a halide anion + H(+). Functionally, conjugation of reduced glutathione to a wide number of exogenous and endogenous hydrophobic electrophiles. This is Glutathione S-transferase theta-1 (GSTT1) from Gallus gallus (Chicken).